The primary structure comprises 378 residues: Protein RecA (378 aa).

An ATP-binding site is contributed by 79 to 86 (GPESSGKT).

It belongs to the RecA family.

The protein resides in the cytoplasm. Its function is as follows. Can catalyze the hydrolysis of ATP in the presence of single-stranded DNA, the ATP-dependent uptake of single-stranded DNA by duplex DNA, and the ATP-dependent hybridization of homologous single-stranded DNAs. It interacts with LexA causing its activation and leading to its autocatalytic cleavage. This chain is Protein RecA, found in Streptococcus pyogenes serotype M12 (strain MGAS2096).